The chain runs to 413 residues: Multifunctional CCA protein (413 aa).

Glycine 8 and arginine 11 together coordinate ATP. CTP-binding residues include glycine 8 and arginine 11. Mg(2+) contacts are provided by aspartate 21 and aspartate 23. Residues arginine 91, arginine 137, and arginine 140 each contribute to the ATP site. CTP is bound by residues arginine 91, arginine 137, and arginine 140. Residues 228–329 form the HD domain; the sequence is TGVHTLMTLS…VKLFDAIDAW (102 aa).

This sequence belongs to the tRNA nucleotidyltransferase/poly(A) polymerase family. Bacterial CCA-adding enzyme type 1 subfamily. As to quaternary structure, monomer. Can also form homodimers and oligomers. The cofactor is Mg(2+). Ni(2+) serves as cofactor.

The enzyme catalyses a tRNA precursor + 2 CTP + ATP = a tRNA with a 3' CCA end + 3 diphosphate. It catalyses the reaction a tRNA with a 3' CCA end + 2 CTP + ATP = a tRNA with a 3' CCACCA end + 3 diphosphate. Its function is as follows. Catalyzes the addition and repair of the essential 3'-terminal CCA sequence in tRNAs without using a nucleic acid template. Adds these three nucleotides in the order of C, C, and A to the tRNA nucleotide-73, using CTP and ATP as substrates and producing inorganic pyrophosphate. tRNA 3'-terminal CCA addition is required both for tRNA processing and repair. Also involved in tRNA surveillance by mediating tandem CCA addition to generate a CCACCA at the 3' terminus of unstable tRNAs. While stable tRNAs receive only 3'-terminal CCA, unstable tRNAs are marked with CCACCA and rapidly degraded. The polypeptide is Multifunctional CCA protein (Salmonella schwarzengrund (strain CVM19633)).